The sequence spans 833 residues: Leucine--tRNA ligase (833 aa).

Positions 41–52 (PYPSGAGLHVGH) match the 'HIGH' region motif. The short motif at 610-614 (KMSKS) is the 'KMSKS' region element. Residue Lys-613 coordinates ATP.

It belongs to the class-I aminoacyl-tRNA synthetase family.

It is found in the cytoplasm. It catalyses the reaction tRNA(Leu) + L-leucine + ATP = L-leucyl-tRNA(Leu) + AMP + diphosphate. In Streptococcus pneumoniae serotype 4 (strain ATCC BAA-334 / TIGR4), this protein is Leucine--tRNA ligase.